The chain runs to 460 residues: NADH-ubiquinone oxidoreductase chain 4 (460 aa).

13 helical membrane passes run 20–42 (SKWLWTTTTMNSFLIAFISLTWL), 61–81 (PLSTPLLVLTCWLLPLMILAS), 94–113 (RMYITLLASLQTFMIMAFGA), 114–134 (TKIIMFYIMFEATLIPTLIII), 148–168 (TYFLFYTLAGSLPLLVALLLL), 195–215 (IWWAGCLIAFLVKMPLYGMHL), 225–245 (PVAGSMILAAVLLKLGGYGMM), 258–278 (LAYPFIILALWGVIMTGLVCL), 285–304 (SLIAYSSVGHMGLVAGGILI), 308–330 (WGFTGAIILMIAHGLTSSALFCL), 351–371 (MVLPLATVWWFIANLANLALP), 380–400 (LMIITALFNWSPWTIIITGMG), and 436–456 (LLMTLHLIPIILLMLKPELMW).

It belongs to the complex I subunit 4 family. Core subunit of respiratory chain NADH dehydrogenase (Complex I) which is composed of 45 different subunits.

It is found in the mitochondrion inner membrane. It catalyses the reaction a ubiquinone + NADH + 5 H(+)(in) = a ubiquinol + NAD(+) + 4 H(+)(out). Functionally, core subunit of the mitochondrial membrane respiratory chain NADH dehydrogenase (Complex I) which catalyzes electron transfer from NADH through the respiratory chain, using ubiquinone as an electron acceptor. Essential for the catalytic activity and assembly of complex I. This chain is NADH-ubiquinone oxidoreductase chain 4 (mt-nd4), found in Danio rerio (Zebrafish).